The chain runs to 403 residues: Phosphopentomutase (403 aa).

Mn(2+)-binding residues include D13, D298, H303, D339, H340, and H351.

Belongs to the phosphopentomutase family. Requires Mn(2+) as cofactor.

Its subcellular location is the cytoplasm. It catalyses the reaction 2-deoxy-alpha-D-ribose 1-phosphate = 2-deoxy-D-ribose 5-phosphate. The catalysed reaction is alpha-D-ribose 1-phosphate = D-ribose 5-phosphate. It participates in carbohydrate degradation; 2-deoxy-D-ribose 1-phosphate degradation; D-glyceraldehyde 3-phosphate and acetaldehyde from 2-deoxy-alpha-D-ribose 1-phosphate: step 1/2. Its function is as follows. Isomerase that catalyzes the conversion of deoxy-ribose 1-phosphate (dRib-1-P) and ribose 1-phosphate (Rib-1-P) to deoxy-ribose 5-phosphate (dRib-5-P) and ribose 5-phosphate (Rib-5-P), respectively. This Streptococcus pyogenes serotype M5 (strain Manfredo) protein is Phosphopentomutase.